The primary structure comprises 121 residues: Chorion protein S15 (121 aa).

Residues 1 to 18 (MKYLFVCVSLALFAYISA) form the signal peptide.

The protein belongs to the chorion protein S15/S18 family.

Its subcellular location is the secreted. Its function is as follows. Chorion membrane (egg shell) protein; plays a role in protecting the egg from the environment. The polypeptide is Chorion protein S15 (Cp15) (Drosophila subobscura (Fruit fly)).